We begin with the raw amino-acid sequence, 297 residues long: 4-hydroxy-tetrahydrodipicolinate synthase (297 aa).

T49 is a pyruvate binding site. Y137 (proton donor/acceptor) is an active-site residue. The active-site Schiff-base intermediate with substrate is the K166. I208 lines the pyruvate pocket.

It belongs to the DapA family. In terms of assembly, homotetramer; dimer of dimers.

The protein resides in the cytoplasm. The enzyme catalyses L-aspartate 4-semialdehyde + pyruvate = (2S,4S)-4-hydroxy-2,3,4,5-tetrahydrodipicolinate + H2O + H(+). It participates in amino-acid biosynthesis; L-lysine biosynthesis via DAP pathway; (S)-tetrahydrodipicolinate from L-aspartate: step 3/4. Catalyzes the condensation of (S)-aspartate-beta-semialdehyde [(S)-ASA] and pyruvate to 4-hydroxy-tetrahydrodipicolinate (HTPA). The chain is 4-hydroxy-tetrahydrodipicolinate synthase from Porphyromonas gingivalis (strain ATCC 33277 / DSM 20709 / CIP 103683 / JCM 12257 / NCTC 11834 / 2561).